The sequence spans 245 residues: 8-amino-3,8-dideoxy-manno-octulosonate cytidylyltransferase (245 aa).

Belongs to the KdsB family.

The protein resides in the cytoplasm. It carries out the reaction 8-amino-3,8-dideoxy-alpha-D-manno-octulosonate + CTP = CMP-8-amino-3,8-dideoxy-alpha-D-manno-oct-2-ulosonate + diphosphate. It functions in the pathway bacterial outer membrane biogenesis; lipopolysaccharide biosynthesis. Activates KDO8N (a required 8-carbon sugar) for incorporation into bacterial lipopolysaccharide in the Shewanella genus. This Shewanella frigidimarina (strain NCIMB 400) protein is 8-amino-3,8-dideoxy-manno-octulosonate cytidylyltransferase.